Reading from the N-terminus, the 209-residue chain is uncharacterized protein (209 aa).

A coiled-coil region spans residues 41–76; sequence NVENLCLIRNKLKTDIENLLENKIDVENKLLVLRNQ.

This is an uncharacterized protein from Acanthamoeba polyphaga (Amoeba).